Here is a 3797-residue protein sequence, read N- to C-terminus: A-kinase anchor protein 9 (3797 aa).

The disordered stretch occupies residues 1–140; it reads MEDEERQRKL…SSEQGAQSSQ (140 aa). Polar residues-rich tracts occupy residues 50-65 and 92-108; these read HTDQ…SSQR and EIST…NGCN. The segment covering 115 to 124 has biased composition (basic and acidic residues); it reads KPTDPLREEE. S139 is subject to Phosphoserine. 2 coiled-coil regions span residues 140 to 607 and 640 to 976; these read QTCL…LRTQ and IHYK…LLAN. S1288 is subject to Phosphoserine. Disordered stretches follow at residues 1643–1668, 2323–2343, and 2419–2454; these read STQT…LERS, VVST…EESF, and SDNL…ASRT. Composition is skewed to basic and acidic residues over residues 1648–1668 and 2328–2343; these read DGHD…LERS and QQRE…EESF. The stretch at 1808–2377 forms a coiled coil; the sequence is SRLQAAVEKL…MTHMNNVLKE (570 aa). Over residues 2438-2454 the composition is skewed to polar residues; sequence KQTSLTRLQESPEASRT. The tract at residues 2498–2510 is PKA-RII subunit binding domain; that stretch reads DLQRSLEKFAAAL. Disordered regions lie at residues 2604 to 2695 and 3271 to 3296; these read LEEA…SSSG and MEKD…QKKM. Residues 2606–2615 are compositionally biased toward acidic residues; sequence EAEERPEEGG. Basic and acidic residues predominate over residues 2642–2669; sequence PLTEAKEKLSYSLEKEKRTGEQESREAP. The stretch at 2975 to 3325 forms a coiled coil; sequence LQKADRRSLL…QVYKLDLEGK (351 aa). Polar residues predominate over residues 3279–3294; the sequence is QKTLQTEQEANTQGQK. S3732, S3755, and S3787 each carry phosphoserine.

As to quaternary structure, interacts with the regulatory region of protein kinase N (PKN), protein phosphatase 2A (PP2A), protein phosphatase 1 (PP1) and the immature non-phosphorylated form of PKC epsilon. Interacts with CIP4 and FNBP1. Interacts with chloride intracellular channel proteins CLIC1, CLIC4 and CLIC5. CSNK1D binding promotes its centrosomal subcellular location. Interacts with GM130/GOLGA2; leading to recruitment to the Golgi apparatus. Interacts with KCNQ1; targets protein kinase A (PKA) catalytic and regulatory subunits and protein phosphatase 1 (PP1), to the heterodimer KCNQ1-KCNE1. Interacts with PDE4DIP isoform 2; this interaction stabilizes both proteins. In complex with PDE4DIP isoform 2, recruits CAMSAP2 to the Golgi apparatus. Forms a pericentrosomal complex with CDK5RAP2, EB1/MAPRE1 and PDE4DIP isoform 2; within this complex, MAPRE1 binding to CDK5RAP2 may be mediated by PDE4DIP. Interacts with MAPRE1 and MAPRE3. Interacts (via C-terminus) with CAMSAP2; this interaction is much stronger in the presence of PDE4DIP isoform 2. Interacts with CAMSAP3. Interacts (via C-terminus) with the gamma-tubulin ring complex (gamma-TuRC), composed of gamma-tubulin, TUBGCP2, TUBGCP3, TUBGCP4, TUBGCP5 and TUBGCP6.

It is found in the golgi apparatus. The protein localises to the cytoplasm. Its subcellular location is the cytoskeleton. The protein resides in the microtubule organizing center. It localises to the centrosome. Functionally, scaffolding protein that assembles several protein kinases and phosphatases on the centrosome and Golgi apparatus. Required to maintain the integrity of the Golgi apparatus. Required for microtubule nucleation at the cis-side of the Golgi apparatus. Required for association of the centrosomes with the poles of the bipolar mitotic spindle during metaphase. In complex with PDE4DIP isoform 2/MMG8/SMYLE, recruits CAMSAP2 to the Golgi apparatus and tethers non-centrosomal minus-end microtubules to the Golgi, an important step for polarized cell movement. In complex with PDE4DIP isoform 2, EB1/MAPRE1 and CDK5RAP2, contributes to microtubules nucleation and extension also from the centrosome to the cell periphery. This Mus musculus (Mouse) protein is A-kinase anchor protein 9 (Akap9).